Consider the following 293-residue polypeptide: MRLDAFAPAKVNLFLHVGGPDAAGYHPISSLMLFADVGDRVSLQAADAPSFEATGWFGAEVPVDDGNLVVRAEMALRARLGGPTPPFRLILDKALPIAAGLGGGSSDAGAALRLLREALAPDLSDADLEAVAGGLGADGAACLWGAPVMARGRGERLSPAPALPALHAVLVNPLVPSPTGAVYRAYDAAVAPEGEAPPPMLDGLESIEEVCAWLAGFTRNDLQAPAVALEPRIGQVLDLLADEPETLLARMSGSGATCFALCAGDIEAEGLAERIEQMRPDWWVKRCRLGGPF.

Lys10 is a catalytic residue. 96–106 provides a ligand contact to ATP; sequence PIAAGLGGGSS. Residue Asp138 is part of the active site.

The protein belongs to the GHMP kinase family. IspE subfamily.

The catalysed reaction is 4-CDP-2-C-methyl-D-erythritol + ATP = 4-CDP-2-C-methyl-D-erythritol 2-phosphate + ADP + H(+). The protein operates within isoprenoid biosynthesis; isopentenyl diphosphate biosynthesis via DXP pathway; isopentenyl diphosphate from 1-deoxy-D-xylulose 5-phosphate: step 3/6. In terms of biological role, catalyzes the phosphorylation of the position 2 hydroxy group of 4-diphosphocytidyl-2C-methyl-D-erythritol. In Caulobacter sp. (strain K31), this protein is 4-diphosphocytidyl-2-C-methyl-D-erythritol kinase.